The primary structure comprises 238 residues: MQLGVNVDHVATLRNLRSTAYPDVVRIASKAVECGADFITVHLREDRRHIRDGDVFALKKHLAVPLNLEMAATREMLEIAKKVAPRYVCLVPEKREEITTESGVDAKGMFEILAPVVSDLRQSGIGVTLFIEPEKEQVDYAKKLCADKVELHVGAYCLSKSQGELERIANAAAYSHEQGMECHAGHGIDYGTAATIATIRHVSALNVGHFLICESLLHGVGSAVRNMKKIILEQRHNA.

Asn6 provides a ligand contact to 3-amino-2-oxopropyl phosphate. Residue 8–9 (DH) participates in 1-deoxy-D-xylulose 5-phosphate binding. Position 17 (Arg17) interacts with 3-amino-2-oxopropyl phosphate. His42 functions as the Proton acceptor in the catalytic mechanism. 1-deoxy-D-xylulose 5-phosphate contacts are provided by Arg44 and His49. Glu69 (proton acceptor) is an active-site residue. Thr99 provides a ligand contact to 1-deoxy-D-xylulose 5-phosphate. Residue His186 is the Proton donor of the active site. Residues Gly187 and 208-209 (GH) each bind 3-amino-2-oxopropyl phosphate.

It belongs to the PNP synthase family. Homooctamer; tetramer of dimers.

The protein resides in the cytoplasm. The catalysed reaction is 3-amino-2-oxopropyl phosphate + 1-deoxy-D-xylulose 5-phosphate = pyridoxine 5'-phosphate + phosphate + 2 H2O + H(+). It participates in cofactor biosynthesis; pyridoxine 5'-phosphate biosynthesis; pyridoxine 5'-phosphate from D-erythrose 4-phosphate: step 5/5. Catalyzes the complicated ring closure reaction between the two acyclic compounds 1-deoxy-D-xylulose-5-phosphate (DXP) and 3-amino-2-oxopropyl phosphate (1-amino-acetone-3-phosphate or AAP) to form pyridoxine 5'-phosphate (PNP) and inorganic phosphate. This Anaplasma marginale (strain St. Maries) protein is Pyridoxine 5'-phosphate synthase.